The primary structure comprises 554 residues: Eukaryotic translation initiation factor 3 subunit D-2 (554 aa).

Residues 291–305 form an RNA gate region; the sequence is QFDLLTVNETALEPP. Residues 530-554 are disordered; that stretch reads NAFDSDGNEDEETSEDRPFLKSMAN.

It belongs to the eIF-3 subunit D family. As to quaternary structure, component of the eukaryotic translation initiation factor 3 (eIF-3) complex. The eIF-3 complex interacts with pix.

It is found in the cytoplasm. MRNA cap-binding component of the eukaryotic translation initiation factor 3 (eIF-3) complex, which is involved in protein synthesis of a specialized repertoire of mRNAs and, together with other initiation factors, stimulates binding of mRNA and methionyl-tRNAi to the 40S ribosome. The eIF-3 complex specifically targets and initiates translation of a subset of mRNAs involved in cell proliferation. In the eIF-3 complex, eif3d specifically recognizes and binds the 7-methylguanosine cap of a subset of mRNAs. In Drosophila mojavensis (Fruit fly), this protein is Eukaryotic translation initiation factor 3 subunit D-2.